The sequence spans 265 residues: Small ribosomal subunit protein eS1 (265 aa).

Residues 234–256 (EGSTTTSKGVTSEGGEKVDRVDG) are disordered. Over residues 247–256 (GGEKVDRVDG) the composition is skewed to basic and acidic residues.

This sequence belongs to the eukaryotic ribosomal protein eS1 family. Component of the small ribosomal subunit. Mature ribosomes consist of a small (40S) and a large (60S) subunit. The 40S subunit contains about 33 different proteins and 1 molecule of RNA (18S). The 60S subunit contains about 49 different proteins and 3 molecules of RNA (28S, 5.8S and 5S).

The protein localises to the cytoplasm. This is Small ribosomal subunit protein eS1 from Aplysia californica (California sea hare).